Here is a 98-residue protein sequence, read N- to C-terminus: Class II hydrophobin 2 (98 aa).

Residues 1–21 form the signal peptide; sequence MFFSRISTIVSMTALFASALA. 4 disulfides stabilise this stretch: C34-C80, C41-C71, C42-C54, and C81-C92.

Belongs to the cerato-ulmin hydrophobin family.

The protein resides in the secreted. It is found in the cell wall. Aerial growth, conidiation, and dispersal of filamentous fungi in the environment rely upon a capability of their secreting small amphipathic proteins called hydrophobins (HPBs) with low sequence identity. Class I can self-assemble into an outermost layer of rodlet bundles on aerial cell surfaces, conferring cellular hydrophobicity that supports fungal growth, development and dispersal; whereas Class II form highly ordered films at water-air interfaces through intermolecular interactions but contribute nothing to the rodlet structure. In Botryotinia fuckeliana, hydrophobins are not involved in conferring surface hydrophobicity to conidia and aerial hyphae and their function in sclerotia and fruiting bodies remains to be investigated. The sequence is that of Class II hydrophobin 2 from Botryotinia fuckeliana (strain B05.10) (Noble rot fungus).